Reading from the N-terminus, the 499-residue chain is Glycerol kinase (499 aa).

T13 lines the ADP pocket. Residues T13, T14, and S15 each contribute to the ATP site. T13 is a binding site for sn-glycerol 3-phosphate. Residue R17 coordinates ADP. The sn-glycerol 3-phosphate site is built by R83, E84, Y135, and D245. Glycerol contacts are provided by R83, E84, Y135, D245, and Q246. ADP-binding residues include T267 and G310. ATP-binding residues include T267, G310, Q314, and A411. Residues A411 and N415 each contribute to the ADP site.

Belongs to the FGGY kinase family.

The catalysed reaction is glycerol + ATP = sn-glycerol 3-phosphate + ADP + H(+). It functions in the pathway polyol metabolism; glycerol degradation via glycerol kinase pathway; sn-glycerol 3-phosphate from glycerol: step 1/1. Its activity is regulated as follows. Inhibited by fructose 1,6-bisphosphate (FBP). Its function is as follows. Key enzyme in the regulation of glycerol uptake and metabolism. Catalyzes the phosphorylation of glycerol to yield sn-glycerol 3-phosphate. This is Glycerol kinase from Xylella fastidiosa (strain M23).